Reading from the N-terminus, the 225-residue chain is Glutathione s-transferase kappa 2 (225 aa).

Residues 15 to 17, Asn-52, and 200 to 201 each bind glutathione; these read SPY and SD.

This sequence belongs to the GST superfamily. Kappa family. In terms of tissue distribution, expressed in the pharynx, body wall muscles and epidermis. Weaker expression is seen in the intestine.

Its subcellular location is the mitochondrion. It catalyses the reaction RX + glutathione = an S-substituted glutathione + a halide anion + H(+). Functionally, has roles in respiratory and lipid metabolism. The sequence is that of Glutathione s-transferase kappa 2 (gstk-2) from Caenorhabditis elegans.